The primary structure comprises 464 residues: Probable LL-diaminopimelate aminotransferase, chloroplastic (464 aa).

A chloroplast-targeting transit peptide spans 1-39 (MAASPAAGAAAATVSSFVSPSSFSSVKASKPDRLRPARR). Glycine 102 is a substrate binding site. Tyrosine 132 is a binding site for pyridoxal 5'-phosphate. 4 residues coordinate substrate: glutamate 135, lysine 167, tyrosine 190, and asparagine 247. Residues asparagine 247, aspartate 275, tyrosine 278, serine 305, and serine 307 each contribute to the pyridoxal 5'-phosphate site. Position 308 is an N6-(pyridoxal phosphate)lysine (lysine 308). Pyridoxal 5'-phosphate is bound at residue arginine 316. Positions 347 and 442 each coordinate substrate.

This sequence belongs to the class-I pyridoxal-phosphate-dependent aminotransferase family. LL-diaminopimelate aminotransferase subfamily. Homodimer. Requires pyridoxal 5'-phosphate as cofactor.

The protein localises to the plastid. The protein resides in the chloroplast. The catalysed reaction is (2S,6S)-2,6-diaminopimelate + 2-oxoglutarate = (S)-2,3,4,5-tetrahydrodipicolinate + L-glutamate + H2O + H(+). It participates in amino-acid biosynthesis; L-lysine biosynthesis via DAP pathway; LL-2,6-diaminopimelate from (S)-tetrahydrodipicolinate (aminotransferase route): step 1/1. Functionally, required for lysine biosynthesis. Catalyzes the direct conversion of tetrahydrodipicolinate to LL-diaminopimelate, a reaction that requires three enzymes in E.coli. This is Probable LL-diaminopimelate aminotransferase, chloroplastic (AGD2) from Oryza sativa subsp. japonica (Rice).